The primary structure comprises 244 residues: Glutathione S-transferase theta-2 (244 aa).

The GST N-terminal domain maps to 2 to 82 (GLELYLDLLS…YLSSKYQVAD (81 aa)). Glutathione is bound by residues 40–41 (HL), 53–54 (KV), 66–67 (ES), and 104–107 (DNIR). Residues 88–230 (DLQARAQVHE…AKKTLPVPPP (143 aa)) form the GST C-terminal domain.

This sequence belongs to the GST superfamily. Theta family. As to quaternary structure, homodimer. Highest values found in liver followed by testis, adrenal gland, kidney, lung, brain and skeletal muscle. In liver, highest expression found in central vein limiting plate hepatocytes. In lung, expressed mainly in club cells of the bronchiolar epithelium and, at low levels, in type II alveolar cells.

Its subcellular location is the cytoplasm. It localises to the cytosol. The protein localises to the nucleus. The catalysed reaction is RX + glutathione = an S-substituted glutathione + a halide anion + H(+). In terms of biological role, catalyzes the inactivation of reactive sulfate esters in carcinogenic arylmethanols. Highest activity towards ethacrynic acid and cumene hydroperoxide. The protein is Glutathione S-transferase theta-2 (Gstt2) of Rattus norvegicus (Rat).